A 623-amino-acid polypeptide reads, in one-letter code: Transketolase (623 aa).

Position 1 is an N-acetylmethionine (Met1). N6-acetyllysine occurs at positions 6 and 11. His37 lines the substrate pocket. Thiamine diphosphate is bound by residues Ser40 and His77. Ser104 carries the post-translational modification Phosphoserine. 123–125 (GSL) is a thiamine diphosphate binding site. Lys144 carries the post-translational modification N6-acetyllysine. Residue Asp155 coordinates Mg(2+). Thiamine diphosphate contacts are provided by Gly156 and Asn185. Residues Asn185 and Leu187 each coordinate Mg(2+). Lys204, Lys232, and Lys241 each carry N6-acetyllysine. Residues Lys244 and His258 each contribute to the thiamine diphosphate site. Residue His258 participates in substrate binding. At Lys260 the chain carries N6-acetyllysine. The residue at position 275 (Tyr275) is a Phosphotyrosine. Thr287 bears the Phosphothreonine mark. Phosphoserine is present on Ser295. 2 residues coordinate substrate: Arg318 and Ser345. Ser345 is subject to Phosphoserine. Residue Lys352 forms a Glycyl lysine isopeptide (Lys-Gly) (interchain with G-Cter in SUMO2) linkage. Glu366 serves as the catalytic Proton donor. Residue Phe392 coordinates thiamine diphosphate. Substrate contacts are provided by His416 and Asp424. A thiamine diphosphate-binding site is contributed by Gln428. A substrate-binding site is contributed by Arg474. 2 positions are modified to N6-acetyllysine: Lys538 and Lys603.

This sequence belongs to the transketolase family. As to quaternary structure, homodimer. It depends on Mg(2+) as a cofactor. The cofactor is Ca(2+). Requires Mn(2+) as cofactor. Co(2+) is required as a cofactor. Thiamine diphosphate serves as cofactor.

The enzyme catalyses D-sedoheptulose 7-phosphate + D-glyceraldehyde 3-phosphate = aldehydo-D-ribose 5-phosphate + D-xylulose 5-phosphate. Its function is as follows. Catalyzes the transfer of a two-carbon ketol group from a ketose donor to an aldose acceptor, via a covalent intermediate with the cofactor thiamine pyrophosphate. The chain is Transketolase (Tkt) from Mus musculus (Mouse).